The sequence spans 486 residues: MDLSAKDEFSAEKRNPDNYDSVNNPSGDWRVDSYPSENLISAGPASCSPSQMMDSFGQTLWYDPTSVQAVGYAGFNGGNASSSSFRGSIDRSLEMGWNLPNLLPPKGNGLFLPNASSFLPPSMAQFPADSGFIERAARFSLFSGGNFSDMVNQPLGNSEAIGLFLQGGGTMQGQCQSNELNVGEPHNDVSVAVKESTVRSSEQAKPNVPGSGNVSEDTQSSGGNGQKGRETSSNTKKRKRNGQKNSEAAQSHRSQQSEEEPDNNGDEKRNDEQSPNSPGKKSNSGKQQGKQSSDPPKDGYIHVRARRGQATNSHSLAERVRREKISERMKFLQDLVPGCNKVTGKAVMLDEIINYVQSLQRQVEFLSMKLATVNPQMDFNLEGLLAKDALQLRAGSSSTTPFPPNMSMAYPPLPHGFMQQTLSSIGRTITSPLSPMNGGFKRQETNGWEGDLQNVIHINYGAGDVTPDPQAAATASLPAANMKVEP.

A compositionally biased stretch (basic and acidic residues) spans 1–17; the sequence is MDLSAKDEFSAEKRNPD. Disordered regions lie at residues 1–30 and 194–300; these read MDLSAKDEFSAEKRNPDNYDSVNNPSGDWR and KEST…KDGY. 2 stretches are compositionally biased toward polar residues: residues 198-221 and 243-254; these read VRSSEQAKPNVPGSGNVSEDTQSS and QKNSEAAQSHRS. Residues 273-293 are compositionally biased toward low complexity; that stretch reads QSPNSPGKKSNSGKQQGKQSS. Residues 309–359 enclose the bHLH domain; that stretch reads QATNSHSLAERVRREKISERMKFLQDLVPGCNKVTGKAVMLDEIINYVQSL.

In terms of assembly, homodimer. Interacts with IBH1. As to expression, expressed constitutively in roots, stems, and flowers.

It localises to the nucleus. Functionally, transcriptional activator involved in cell elongation. Regulates the expression of a subset of genes involved in cell expansion by binding to the G-box motif. The protein is Transcription factor bHLH49 (BHLH49) of Arabidopsis thaliana (Mouse-ear cress).